The chain runs to 862 residues: DNA mismatch repair protein MutS (862 aa).

An ATP-binding site is contributed by 608–615; that stretch reads GPNMAGKS.

This sequence belongs to the DNA mismatch repair MutS family.

Its function is as follows. This protein is involved in the repair of mismatches in DNA. It is possible that it carries out the mismatch recognition step. This protein has a weak ATPase activity. In Bacteroides thetaiotaomicron (strain ATCC 29148 / DSM 2079 / JCM 5827 / CCUG 10774 / NCTC 10582 / VPI-5482 / E50), this protein is DNA mismatch repair protein MutS.